Consider the following 986-residue polypeptide: P3N-PIPO polyprotein (986 aa).

A Peptidase S30 domain is found at Lys141–Phe284. Active-site for P1 proteinase activity residues include His192, Asp201, and Ser235. The Involved in interaction with stylet and aphid transmission motif lies at Lys334–Cys337. Residues Pro592–Lys594 carry the Involved in virions binding and aphid transmission motif. The Peptidase C6 domain occupies Leu618–Gly740. Residues Cys626 and His699 each act as for helper component proteinase activity in the active site.

It belongs to the potyviridae P3N-PIPO polyprotein family. As to quaternary structure, interacts (via PIPO domain) with host PCaP1 protein; this interaction may help to anchor the movement complex to the plasma membrane from which the complex could move to the plasmodesmata. Post-translationally, potyviral RNA is expressed as two polyproteins which undergo post-translational proteolytic processing. Genome polyprotein is processed by NIa-pro, P1 and HC-pro proteinases resulting in the production of at least ten individual proteins. P3N-PIPO is cleaved by P1 and HC-pro proteinases resulting in the production of three individual proteins. The P1 proteinase and the HC-pro cleave only their respective C-termini autocatalytically.

It is found in the host cell junction. It localises to the host plasmodesma. The enzyme catalyses Hydrolyzes a Gly-|-Gly bond at its own C-terminus, commonly in the sequence -Tyr-Xaa-Val-Gly-|-Gly, in the processing of the potyviral polyprotein.. In terms of biological role, required for aphid transmission and also has proteolytic activity. Only cleaves a Gly-Gly dipeptide at its own C-terminus. Interacts with virions and aphid stylets. Acts as a suppressor of RNA-mediated gene silencing, also known as post-transcriptional gene silencing (PTGS), a mechanism of plant viral defense that limits the accumulation of viral RNAs. May have RNA-binding activity. Functionally, allows efficient cell to cell propagation, by bypassing the host cell wall barrier. Transports viral genome to neighboring plant cells directly through plasmosdesmata, without any budding. This is P3N-PIPO polyprotein from Potato virus Y (strain N) (PVY).